Here is a 55-residue protein sequence, read N- to C-terminus: MVKLSKEAKQRLQQLFKGGQFAIRWGFIPLVIYLGFTRGADPGMPEPSVLSLLWG.

Residues 1–20 (MVKLSKEAKQRLQQLFKGGQ) are Cytoplasmic-facing. Residues 21–40 (FAIRWGFIPLVIYLGFTRGA) form a helical membrane-spanning segment. Residues 41–55 (DPGMPEPSVLSLLWG) lie on the Mitochondrial intermembrane side of the membrane.

The protein belongs to the Tom7 family. As to quaternary structure, forms part of the preprotein translocase complex of the outer mitochondrial membrane (TOM complex) which consists of at least 7 different proteins (TOMM5, TOMM6, TOMM7, TOMM20, TOMM22, TOMM40 and TOMM70).

The protein localises to the mitochondrion outer membrane. In terms of biological role, required for assembly and stability of the TOM complex. Positive regulator of PRKN translocation to damaged mitochondria. Acts probably by stabilizing PINK1 on the outer membrane of depolarized mitochondria. The protein is Mitochondrial import receptor subunit TOM7 homolog (Tomm7) of Mus musculus (Mouse).